The chain runs to 598 residues: Fibulin-1 (598 aa).

Intrachain disulfides connect Ala-1–Cys-25, Cys-7–Cys-26, Cys-28–Cys-52, Cys-29–Cys-59, Cys-42–Cys-60, Cys-96–Cys-106, Cys-102–Cys-115, Cys-117–Cys-130, Cys-136–Cys-149, Cys-143–Cys-158, Cys-164–Cys-176, Cys-182–Cys-195, Cys-189–Cys-204, Cys-210–Cys-222, Cys-228–Cys-242, Cys-257–Cys-270, Cys-275–Cys-288, Cys-282–Cys-297, Cys-299–Cys-312, Cys-318–Cys-330, Cys-326–Cys-339, Cys-341–Cys-354, Cys-360–Cys-369, Cys-365–Cys-378, Cys-380–Cys-394, Cys-400–Cys-413, Cys-409–Cys-422, Cys-424–Cys-438, Cys-444–Cys-457, Cys-451–Cys-466, and Cys-471–Cys-483. Anaphylatoxin-like domains follow at residues 1–27 (ANEQ…RCCH) and 28–60 (CCLL…RACC). Residue Asn-14 is glycosylated (N-linked (GlcNAc...) asparagine). Positions 92–131 (LNDRCRGGGPCKQQCRDTGDEVVCSCFVGYQLLSDGVSCE) constitute an EGF-like 1 domain. The EGF-like 2; calcium-binding domain occupies 132–177 (DVNECITGSHSCRLGESCINTVGSFRCQRDSSCGTGYELTEDNSCK). Residues 178-223 (DIDQCESGIHNCLPDFICQNTLGSFRCRPKLQCKNGFIQDALANCI) enclose the EGF-like 3; calcium-binding domain. Residues 224-270 (DINECLSIVSAPCPTGHTCINTEGSYTQKNVPNCGRGYHLNEEGTRC) form the EGF-like 4; calcium-binding domain. Positions 271–313 (DVNECAPPAEPCGKGHRCVNSPGSFRCECKTGYYFDGISRMCV) constitute an EGF-like 5; calcium-binding domain. Residues 271–355 (DVNECAPPAE…RLSVDGRSCE (85 aa)) are self-association and FN1-binding. Residues 314–355 (DVNECQRYPGRLCGHKCENTLGSYVCSCSVGFRLSVDGRSCE) form the EGF-like 6; calcium-binding domain. Positions 356 to 395 (DINECSSSPCSQECANVYGSYQCYCRRGYQLSDVDGVTCE) constitute an EGF-like 7; calcium-binding domain. One can recognise an EGF-like 8; calcium-binding domain in the interval 396–439 (DIDECALPTGGHICSYRCINIPGSFQCSCPASGYRLAPNGRNCQ). The region spanning 440–484 (DIDECVTGIHNCSINETCFNIQGGFRCLAFECPENYRRSAATRCE) is the EGF-like 9; calcium-binding domain. 2 N-linked (GlcNAc...) asparagine glycosylation sites follow: Asn-450 and Asn-454.

The protein belongs to the fibulin family. Homomultimerizes and interacts with various extracellular matrix components. Interacts with FBLN7. Interacts with the mature/soluble form of DTR. Interacts with CCN3.

It is found in the secreted. Its subcellular location is the extracellular space. The protein localises to the extracellular matrix. Its function is as follows. Incorporated into fibronectin-containing matrix fibers. May play a role in cell adhesion and migration along protein fibers within the extracellular matrix (ECM). Could be important for certain developmental processes and contribute to the supramolecular organization of ECM architecture, in particular to those of basement membranes. May serve to anchor the mature/soluble form of DTR to its fibers as it migrates through the extracellular matrix. The direct physical association with DTR may be useful in such tissue developmental processes as wound healing. This Chlorocebus aethiops (Green monkey) protein is Fibulin-1 (FBLN1).